Here is a 178-residue protein sequence, read N- to C-terminus: ATP synthase subunit delta (178 aa).

Belongs to the ATPase delta chain family. In terms of assembly, F-type ATPases have 2 components, F(1) - the catalytic core - and F(0) - the membrane proton channel. F(1) has five subunits: alpha(3), beta(3), gamma(1), delta(1), epsilon(1). F(0) has three main subunits: a(1), b(2) and c(10-14). The alpha and beta chains form an alternating ring which encloses part of the gamma chain. F(1) is attached to F(0) by a central stalk formed by the gamma and epsilon chains, while a peripheral stalk is formed by the delta and b chains.

It localises to the cell inner membrane. F(1)F(0) ATP synthase produces ATP from ADP in the presence of a proton or sodium gradient. F-type ATPases consist of two structural domains, F(1) containing the extramembraneous catalytic core and F(0) containing the membrane proton channel, linked together by a central stalk and a peripheral stalk. During catalysis, ATP synthesis in the catalytic domain of F(1) is coupled via a rotary mechanism of the central stalk subunits to proton translocation. Functionally, this protein is part of the stalk that links CF(0) to CF(1). It either transmits conformational changes from CF(0) to CF(1) or is implicated in proton conduction. This Chromobacterium violaceum (strain ATCC 12472 / DSM 30191 / JCM 1249 / CCUG 213 / NBRC 12614 / NCIMB 9131 / NCTC 9757 / MK) protein is ATP synthase subunit delta.